A 323-amino-acid polypeptide reads, in one-letter code: MARVEKPRKVILVGDGAVGSTFAFSMVQQGIAEELGIIDIAKEHVEGDAIDLADATPWTFPKNIYAADYADCKDADLVVITAGAPQKPGETRLDLVNKNLKILSSIVEPVVESGFEGIFLVVANPVDILTHATWKISGFPKDRVIGSGTSLDTGRLQKVIGKMEHVDPRSVNAYMLGEHGDTEFPVWSYNNVGGVKVSDWVKAHGMDESKLEEIHKEVADMAYDIINKKGATFYGIGTASAMIAKAILNDEHRVLPLSVAMDGQYGLHDLHIGTPAVVGRNGLEQIIEMPLTADEQAKMEASAKQLKEVMDKAFEETGVKVRQ.

Residues valine 18, aspartate 39, tyrosine 69, and 83–84 (GA) contribute to the NAD(+) site. Residues glutamine 86 and arginine 92 each contribute to the substrate site. NAD(+) is bound by residues serine 105, 122–124 (VAN), and serine 147. Residue 124-127 (NPVD) participates in substrate binding. 152–155 (DTGR) contacts substrate. The Proton acceptor role is filled by histidine 179. A Phosphotyrosine modification is found at tyrosine 223. Threonine 232 lines the substrate pocket.

The protein belongs to the LDH/MDH superfamily. LDH family. Homotetramer.

It localises to the cytoplasm. It catalyses the reaction (S)-lactate + NAD(+) = pyruvate + NADH + H(+). It participates in fermentation; pyruvate fermentation to lactate; (S)-lactate from pyruvate: step 1/1. Functionally, catalyzes the conversion of lactate to pyruvate. This chain is L-lactate dehydrogenase 1, found in Lactobacillus acidophilus (strain ATCC 700396 / NCK56 / N2 / NCFM).